The chain runs to 376 residues: Glycerol-3-phosphate acyltransferase 9 (376 aa).

Topologically, residues 1-78 (MSSTAGRLVT…SNPPEPWNWN (78 aa)) are cytoplasmic. Phosphoserine is present on S13. The next 3 helical transmembrane spans lie at 79-99 (IYLFPLYCFGVVVRYCILFPL), 102-122 (FTLAFGWIIFLSLFIPVNALL), and 135-155 (VLVEMICSFFVASWTGVVKYH). Residues 156–376 (GPRPSIRPKQ…ESILARLEEK (221 aa)) lie on the Cytoplasmic side of the membrane. The catalytic stretch occupies residues 168-180 (VANHTSMIDFIVL). Positions 171–176 (HTSMID) match the HXXXXD motif motif. 209-218 (GCIWFNRSEA) is a sn-glycerol 3-phosphate binding site. The segment at 242 to 262 (IFPEGTCVNNNYTVMFKKGAF) is glycerol-3-phosphate binding. Residues 266 to 275 (CTVCPIAIKY) form a catalytic region. The endoplasmic reticulum targeting stretch occupies residues 369 to 373 (ILARL).

This sequence belongs to the 1-acyl-sn-glycerol-3-phosphate acyltransferase family. As to quaternary structure, self-interacts. Interacts with LPAT2 and LPCAT2. Up-regulated during embryogenesis. Expressed in seedlings, leaves, stems, roots, floral buds, flowers, pollen, and siliques at various developmental stages.

It localises to the endoplasmic reticulum membrane. It carries out the reaction sn-glycerol 3-phosphate + an acyl-CoA = a 1-acyl-sn-glycero-3-phosphate + CoA. Its pathway is glycerolipid metabolism; triacylglycerol biosynthesis. Functionally, essential protein. Required for male and female gametophytes development. Exhibits sn-1 acyltransferase activity with high specificity for acyl-coenzyme A, thus triggering storage lipid biosynthesis and playing an important role in the Kennedy pathway of glycerolipid biosynthesis. Catalyzes triacylglycerol (TAG) accumulation involved in membrane lipid and oil biosynthesis, especially in seeds. Also contributes to the biosynthesis of both polar lipids and TAG in developing leaves, as well as lipid droplet production in developing pollen grains. Seems to not contribute to surface lipid biosynthesis (e.g. waxes and cutin). This chain is Glycerol-3-phosphate acyltransferase 9, found in Arabidopsis thaliana (Mouse-ear cress).